We begin with the raw amino-acid sequence, 199 residues long: Alpha-D-glucose 1-phosphate phosphatase YihX (199 aa).

Residue Asp6 is the Nucleophile of the active site. Asp6 is a binding site for Mg(2+). Residues 6-8, 107-108, Lys141, and Asp166 contribute to the substrate site; these read DLG and SN. Asp166 is a Mg(2+) binding site.

The protein belongs to the HAD-like hydrolase superfamily. YihX family. Mg(2+) serves as cofactor. Mn(2+) is required as a cofactor. Requires Co(2+) as cofactor. It depends on Zn(2+) as a cofactor.

The enzyme catalyses alpha-D-glucose 1-phosphate + H2O = D-glucose + phosphate. In terms of biological role, catalyzes the dephosphorylation of alpha-D-glucose 1-phosphate (Glc1P) and, to a lesser extent, of other sugar phosphates. Has no activity with the beta form of Glc1P. In addition, YihX has significant phosphatase activity against pyridoxal phosphate (PLP) and low beta-phosphoglucomutase activity. The polypeptide is Alpha-D-glucose 1-phosphate phosphatase YihX (yihX) (Escherichia coli (strain K12)).